Reading from the N-terminus, the 606-residue chain is Aspartate--tRNA(Asp/Asn) ligase (606 aa).

Residue E187 participates in L-aspartate binding. Positions Q211–K214 are aspartate. Positions 233 and 461 each coordinate L-aspartate. Residue R233–E235 coordinates ATP. Residue E495 participates in ATP binding. Residue R502 participates in L-aspartate binding. ATP is bound at residue G547–R550.

Belongs to the class-II aminoacyl-tRNA synthetase family. Type 1 subfamily. Homodimer.

The protein localises to the cytoplasm. The enzyme catalyses tRNA(Asx) + L-aspartate + ATP = L-aspartyl-tRNA(Asx) + AMP + diphosphate. Its function is as follows. Aspartyl-tRNA synthetase with relaxed tRNA specificity since it is able to aspartylate not only its cognate tRNA(Asp) but also tRNA(Asn). Reaction proceeds in two steps: L-aspartate is first activated by ATP to form Asp-AMP and then transferred to the acceptor end of tRNA(Asp/Asn). In Chlorobium phaeobacteroides (strain DSM 266 / SMG 266 / 2430), this protein is Aspartate--tRNA(Asp/Asn) ligase.